The sequence spans 669 residues: MYLLIVFLPLLGSSVAGFFGRFLGSEGSAIMTTTCVSFSSILSLIAFYEVALGASACYLRIAPWISSEMFDASWGFLFDSLTVVMLIVVTFISSLVHLYSISYMSEDPHSPRFMCYLSIFTFFMLMLVTGDNFLQLFLGWEGVGLASYLLIHFWFTRLQADKAAIKAMLVNRVGDFGLALGILGCFTLFQTVDFSTIFACASVPRNSWIFCNMRLNAISLICILLFIGAVGKSAQIGLHTWLPDAMEGPTPVSALIHAATMVTAGVFMIARCSPLFEYSPTALIVITFAGAMTSFLAATTGILQNDLKRVIAYSTCSQLGYMIFACGISNYSVSVFHLMNHAFFKALLFLSAGSVIHAMSDEQDMRKMGGLASSFPLTYAMMLIGSLSLIGFPFLTGFYSKDVILELAYTKYTISGNFAFWLGSISVLFTSYYSFRLLFLTFLVPTNSFGRDISRCHDAPIPMAIPSILLALGSLFVGYLAKDMMIGLGWNFWANSLLVLPKNEILAESEFAAPTIIKLIPILFSTLGAFVAYNVNLVADQFQRAFQTSTFCNRLYSFFNKRWFFDQVLNDFLVRSFLRFGYEVSFEALDKGAIEILGPYGISYTFRRLAERISQLQSGFVYHYAFAMLLGLTLFVTFFCMWDSLSSWVDNRLSFILIVSSFYTKSSQE.

The next 14 helical transmembrane spans lie at 3 to 23 (LLIVFLPLLGSSVAGFFGRFL), 40 to 60 (SILSLIAFYEVALGASACYLR), 76 to 96 (FLFDSLTVVMLIVVTFISSLV), 113 to 133 (FMCYLSIFTFFMLMLVTGDNF), 136 to 156 (LFLGWEGVGLASYLLIHFWFT), 217 to 237 (AISLICILLFIGAVGKSAQIG), 250 to 270 (TPVSALIHAATMVTAGVFMIA), 283 to 303 (LIVITFAGAMTSFLAATTGIL), 319 to 339 (LGYMIFACGISNYSVSVFHLM), 340 to 360 (NHAFFKALLFLSAGSVIHAMS), 375 to 395 (FPLTYAMMLIGSLSLIGFPFL), 417 to 437 (NFAFWLGSISVLFTSYYSFRL), 461 to 481 (IPMAIPSILLALGSLFVGYLA), and 619 to 639 (GFVYHYAFAMLLGLTLFVTFF).

This sequence belongs to the complex I subunit 5 family. Complex I is composed of at least 49 different subunits.

The protein resides in the mitochondrion inner membrane. The enzyme catalyses a ubiquinone + NADH + 5 H(+)(in) = a ubiquinol + NAD(+) + 4 H(+)(out). Its function is as follows. Core subunit of the mitochondrial membrane respiratory chain NADH dehydrogenase (Complex I) that is believed to belong to the minimal assembly required for catalysis. Complex I functions in the transfer of electrons from NADH to the respiratory chain. The immediate electron acceptor for the enzyme is believed to be ubiquinone. In Arabidopsis thaliana (Mouse-ear cress), this protein is NADH-ubiquinone oxidoreductase chain 5 (ND5).